We begin with the raw amino-acid sequence, 255 residues long: Hydroxyacylglutathione hydrolase (255 aa).

Residues histidine 53, histidine 55, aspartate 57, histidine 58, histidine 110, aspartate 127, and histidine 165 each coordinate Zn(2+).

It belongs to the metallo-beta-lactamase superfamily. Glyoxalase II family. Monomer. It depends on Zn(2+) as a cofactor.

The catalysed reaction is an S-(2-hydroxyacyl)glutathione + H2O = a 2-hydroxy carboxylate + glutathione + H(+). The protein operates within secondary metabolite metabolism; methylglyoxal degradation; (R)-lactate from methylglyoxal: step 2/2. Functionally, thiolesterase that catalyzes the hydrolysis of S-D-lactoyl-glutathione to form glutathione and D-lactic acid. The polypeptide is Hydroxyacylglutathione hydrolase (Xanthomonas euvesicatoria pv. vesicatoria (strain 85-10) (Xanthomonas campestris pv. vesicatoria)).